A 790-amino-acid chain; its full sequence is DNA topoisomerase 1 (790 aa).

Polar residues-rich tracts occupy residues 1-18 (MKSN…SNVM), 44-54 (KLSSGALNGNS), and 61-70 (SNLSCPSPYT). The tract at residues 1–196 (MKSNPGITVI…KKRPDVSASV (196 aa)) is disordered. Residues 158-167 (QEEAAADDDP) are compositionally biased toward acidic residues. The span at 168–181 (SISNRNKKSTTPAS) shows a compositional bias: polar residues. 3 interaction with DNA regions span residues 426–427 (KY), 490–495 (RAGNEK), and 581–583 (TAK). A Topo IB-type catalytic domain is found at 433 to 790 (SSSLKGKVTR…AMDVVLIFRF (358 aa)). The O-(3'-phospho-DNA)-tyrosine intermediate role is filled by Y749.

It belongs to the type IB topoisomerase family.

The protein resides in the nucleus. The catalysed reaction is ATP-independent breakage of single-stranded DNA, followed by passage and rejoining.. Its function is as follows. Releases the supercoiling and torsional tension of DNA introduced during the DNA replication and transcription by transiently cleaving and rejoining one strand of the DNA duplex. Introduces a single-strand break via transesterification at a target site in duplex DNA. The scissile phosphodiester is attacked by the catalytic tyrosine of the enzyme, resulting in the formation of a DNA-(3'-phosphotyrosyl)-enzyme intermediate and the expulsion of a 5'-OH DNA strand. The free DNA strand then rotates around the intact phosphodiester bond on the opposing strand, thus removing DNA supercoils. Finally, in the religation step, the DNA 5'-OH attacks the covalent intermediate to expel the active-site tyrosine and restore the DNA phosphodiester backbone. The sequence is that of DNA topoisomerase 1 (TOP1) from Daucus carota (Wild carrot).